Consider the following 205-residue polypeptide: Small ribosomal subunit protein mS26 (205 aa).

A mitochondrion-targeting transit peptide spans 1 to 27 (MLRALSRLGAGTPCRPRAPLVLPARGR).

Belongs to the mitochondrion-specific ribosomal protein mS26 family. In terms of assembly, component of the mitochondrial small ribosomal subunit (mt-SSU). Mature mammalian 55S mitochondrial ribosomes consist of a small (28S) and a large (39S) subunit. The 28S small subunit contains a 12S ribosomal RNA (12S mt-rRNA) and 30 different proteins. The 39S large subunit contains a 16S rRNA (16S mt-rRNA), a copy of mitochondrial valine transfer RNA (mt-tRNA(Val)), which plays an integral structural role, and 52 different proteins.

It is found in the mitochondrion. The polypeptide is Small ribosomal subunit protein mS26 (MRPS26) (Homo sapiens (Human)).